Reading from the N-terminus, the 41-residue chain is Large ribosomal subunit protein bL36 (41 aa).

This sequence belongs to the bacterial ribosomal protein bL36 family.

This chain is Large ribosomal subunit protein bL36, found in Bartonella tribocorum (strain CIP 105476 / IBS 506).